The sequence spans 817 residues: MPNSNVRIPPTVPSKIIDVVDQALRARLLGGSTFNSGFDSLDSVLNLQFRLHYHVIGSNGPAKPVCDVLLKESQNLEKNMSMMEELNDYPEITKLVEKILFNCLAILFFHRGQFQESQRCLLHSLKIHNNTASQRTALMEQYDRYLIVENLYYRGLVSQDINIMQNVFYKELLAHVDTVPPESNGLLFEYISLIVAKLRFNQIQDLAENFKTTVENPFILFLYMIKKFQSPLKKHIDNDDLYLKFGQNVLLKVKFPTASETNDEALEHFNVFLQYYFKFTHIKKIKVNPSWYNFIISSMEKTFQSIEVSKTAMFLFQNLSDNSNDEIKKKTFKRESILNFVNFVKYNDKYYQLHDNSHHDIISFIDAYSFILQNSSKTDSIENVFDYDNTVSTFATSLNSFYKEYNLPLMSQSESLDWLENSTRCVYPGNISKVLTNAWSTLYEIRKCQLDFLVSNNLTSYLCNAMMLSTKEKDNADVEEQEEGEEEKALRELQFKYSYTLAQQRHIETAIKTLESLILSKNPNYYKAWHLLALCRSVQEDKEMSYKIVCSVLEAMNESLQNNTLLLNDRWQFIHLKLTQLALIEEIFGTLEALETLPEVFELYATLFPDSQPKLNSMGPKYSQTKEYLLQMVWIFAANMYMRTKDNDEDAKAAIKEASNVESKFKNLNCNIANGYLSIIKDEPGVALKEFETVLYYDENNLDALVGFAELIFPEELGVEETNLERYYTLSLDKKPGKRAKLTFVNDTDRSAAYARLKFLLECAILESIEAYYSPEVWWYLSLIYEKYQDDEYKNSLLKCIKYQELNPIRSLRYCNY.

This sequence belongs to the YPP1 family. As to quaternary structure, interacts with STT4 and ribosomes.

It is found in the cytoplasmic granule. It localises to the cell membrane. In terms of biological role, involved in endocytosis. The protein is Cargo-transport protein YPP1 (YPP1) of Saccharomyces cerevisiae (strain YJM789) (Baker's yeast).